A 168-amino-acid chain; its full sequence is Photosystem I assembly protein Ycf3 (168 aa).

TPR repeat units follow at residues 35-68 (AFTY…EIDP), 72-105 (SYIL…NPFL), and 120-153 (GEQA…TPGN).

The protein belongs to the Ycf3 family.

The protein localises to the plastid. It localises to the chloroplast thylakoid membrane. In terms of biological role, essential for the assembly of the photosystem I (PSI) complex. May act as a chaperone-like factor to guide the assembly of the PSI subunits. This chain is Photosystem I assembly protein Ycf3, found in Illicium oligandrum (Star anise).